Reading from the N-terminus, the 81-residue chain is Putative membrane protein insertion efficiency factor (81 aa).

The protein belongs to the UPF0161 family.

The protein localises to the cell inner membrane. Its function is as follows. Could be involved in insertion of integral membrane proteins into the membrane. The chain is Putative membrane protein insertion efficiency factor from Pseudomonas savastanoi pv. phaseolicola (strain 1448A / Race 6) (Pseudomonas syringae pv. phaseolicola (strain 1448A / Race 6)).